The chain runs to 141 residues: Large ribosomal subunit protein uL11 (141 aa).

The protein belongs to the universal ribosomal protein uL11 family. As to quaternary structure, part of the ribosomal stalk of the 50S ribosomal subunit. Interacts with L10 and the large rRNA to form the base of the stalk. L10 forms an elongated spine to which L12 dimers bind in a sequential fashion forming a multimeric L10(L12)X complex. Post-translationally, one or more lysine residues are methylated.

Functionally, forms part of the ribosomal stalk which helps the ribosome interact with GTP-bound translation factors. In Streptococcus pneumoniae serotype 2 (strain D39 / NCTC 7466), this protein is Large ribosomal subunit protein uL11.